The primary structure comprises 248 residues: 2,3-bisphosphoglycerate-dependent phosphoglycerate mutase (248 aa).

Residues 8 to 15 (RHGESGWN) and Arg-58 each bind substrate. His-9 acts as the Tele-phosphohistidine intermediate in catalysis. Residues 82–101 (GTGEDRTEREDGSRKDRKEK) form a disordered region. The active-site Proton donor/acceptor is the Glu-124. Substrate contacts are provided by residues 124–127 (ERYY) and Lys-135.

Belongs to the phosphoglycerate mutase family. BPG-dependent PGAM subfamily.

It catalyses the reaction (2R)-2-phosphoglycerate = (2R)-3-phosphoglycerate. It participates in carbohydrate degradation; glycolysis; pyruvate from D-glyceraldehyde 3-phosphate: step 3/5. Its function is as follows. Catalyzes the interconversion of 2-phosphoglycerate and 3-phosphoglycerate. In Methanosarcina acetivorans (strain ATCC 35395 / DSM 2834 / JCM 12185 / C2A), this protein is 2,3-bisphosphoglycerate-dependent phosphoglycerate mutase.